A 688-amino-acid polypeptide reads, in one-letter code: Chaperone protein dnaK1 (688 aa).

Phosphothreonine; by autocatalysis is present on Thr-198. Positions 630 to 661 (DLPRDSYRERDAYNNRDYGRDYGRDYGRDSRP) are enriched in basic and acidic residues. Residues 630–688 (DLPRDSYRERDAYNNRDYGRDYGRDYGRDSRPSYDNSRPPRKSPRPSYQDNWDDDDDWL) form a disordered region.

The protein belongs to the heat shock protein 70 family.

Acts as a chaperone. The polypeptide is Chaperone protein dnaK1 (dnaK1) (Nostoc sp. (strain PCC 7120 / SAG 25.82 / UTEX 2576)).